A 313-amino-acid chain; its full sequence is tRNA uridine(34) hydroxylase (313 aa).

Residues 124–218 (SDPEVLLIDT…YLEEVPQEET (95 aa)) form the Rhodanese domain. Catalysis depends on Cys178, which acts as the Cysteine persulfide intermediate.

This sequence belongs to the TrhO family.

The catalysed reaction is uridine(34) in tRNA + AH2 + O2 = 5-hydroxyuridine(34) in tRNA + A + H2O. In terms of biological role, catalyzes oxygen-dependent 5-hydroxyuridine (ho5U) modification at position 34 in tRNAs. This chain is tRNA uridine(34) hydroxylase, found in Pseudomonas fluorescens (strain SBW25).